The sequence spans 423 residues: Methanol:N,N-dimethyl-4-nitrosoaniline oxidoreductase (423 aa).

This sequence belongs to the iron-containing alcohol dehydrogenase family. Homodecamer. Mg(2+) is required as a cofactor. The cofactor is Zn(2+). NADPH serves as cofactor.

The catalysed reaction is methanol + A = formaldehyde + AH2. Catalyzes the oxidation of methanol to yield formaldehyde. While the in vivo electron acceptor is not known, N,N-dimethyl-4-nitrosoaniline (NDMA) can serve this function in vitro and is reduced to 4-(hydroxylamino)-N,N-dimethylaniline. It is also able to use ethanol and formaldehyde with an activity comparable to methanol, and has a weak activity with methylamine as substrate. The sequence is that of Methanol:N,N-dimethyl-4-nitrosoaniline oxidoreductase from Mycobacterium sp. (strain DSM 3803 / JC1).